The primary structure comprises 392 residues: Probable myosin light chain kinase DDB_G0271550 (392 aa).

One can recognise a Protein kinase domain in the interval 20-278; it reads YEFGPEIGRG…ASQCIKHPWL (259 aa). Residues 26-34 and Lys49 contribute to the ATP site; that span reads IGRGAFSIV. Asp142 functions as the Proton acceptor in the catalytic mechanism. Positions 317-326 are enriched in polar residues; that stretch reads SQSTPNLHSA. Residues 317-392 are disordered; sequence SQSTPNLHSA…NNNNNNNNNI (76 aa). The segment covering 327 to 392 has biased composition (low complexity); the sequence is NSNTNTNSLS…NNNNNNNNNI (66 aa).

Belongs to the protein kinase superfamily. CAMK Ser/Thr protein kinase family. CaMK subfamily.

It carries out the reaction L-seryl-[myosin light chain] + ATP = O-phospho-L-seryl-[myosin light chain] + ADP + H(+). It catalyses the reaction L-threonyl-[myosin light chain] + ATP = O-phospho-L-threonyl-[myosin light chain] + ADP + H(+). Its function is as follows. May phosphorylate a specific serine in the N-terminus of a myosin light chain. The protein is Probable myosin light chain kinase DDB_G0271550 of Dictyostelium discoideum (Social amoeba).